A 505-amino-acid chain; its full sequence is Glutamate--tRNA ligase (505 aa).

The 'HIGH' region signature appears at 12-22 (PSPTGALHIGG). The 'KMSKS' region motif lies at 260 to 264 (KLSKR). Residue Lys-263 coordinates ATP.

This sequence belongs to the class-I aminoacyl-tRNA synthetase family. Glutamate--tRNA ligase type 1 subfamily. As to quaternary structure, monomer.

Its subcellular location is the cytoplasm. The enzyme catalyses tRNA(Glu) + L-glutamate + ATP = L-glutamyl-tRNA(Glu) + AMP + diphosphate. Functionally, catalyzes the attachment of glutamate to tRNA(Glu) in a two-step reaction: glutamate is first activated by ATP to form Glu-AMP and then transferred to the acceptor end of tRNA(Glu). This is Glutamate--tRNA ligase from Bacteroides fragilis (strain ATCC 25285 / DSM 2151 / CCUG 4856 / JCM 11019 / LMG 10263 / NCTC 9343 / Onslow / VPI 2553 / EN-2).